The sequence spans 213 residues: Protein arginine N-methyltransferase SFM1 (213 aa).

Phosphoserine is present on residues S204 and S207.

This sequence belongs to the class IV-like SAM-binding methyltransferase superfamily. Protein arginine N-methyltransferase SFM1 family.

Its subcellular location is the cytoplasm. In terms of biological role, S-adenosyl-L-methionine-dependent protein-arginine N-methyltransferase that monomethylates ribosomal protein S3 (RPS3) at 'Arg-146'. The chain is Protein arginine N-methyltransferase SFM1 from Saccharomyces cerevisiae (strain ATCC 204508 / S288c) (Baker's yeast).